An 823-amino-acid chain; its full sequence is MWGSPALAWAVWLACVQPTVFPWSLSFRSDTDKPSSAAEVLTEASSCWTDTVECFSDYMTLWIPRSHVEGLRRWLARTLHLPGTWRSPDHLDSSLAKCGYFLHLASDGDFLFRVQYSACFVQKEKANYRLEIRIFQKGVMGLERSDRYIMKCPMLRSRLGQESVHCGPMFIQVSRPLPLWRDNRQTPWLLSLRGELVASLEDASLMGLYVDMNATTVTVQSPRQGLLQRWEVLNTSAELLPLWLVSGHHAYSLEAACPPVSFQPESEVLVHIPKQRLGLVKRGSYIEETLSLRFLRVHQSNIFMVTENKDFVVVSIPAAGVLQVQRCQEVGGTPGTQAFYRVDLSLEFAEMAAPVLWTVESFFQCVGSGTESPASTAALRTTPSPPSPGPETPPAGVPPAASSQVWAAGPAAQEWLSRDLLHRPSDALAKKGLGPFLQTAKPARRGQTSASILPRVVQAQRGPQPPPGEAGIPGHPTPPATLPSEPVEGVQASPWRPRPVLPTHPALTLPVSSDASSPSPPAPRPERPESLLVSGPSVTLTEGLGTVRPEQDPAKSPGSPLLLRGLSSGDVAAPEPIMGEPGQASEEFQPLARPWRATLAAEELVSHRSPGEPQETCSGTEVERPRQTGPGLPREGARGHMDLSSSEPSQDIEGPGLSILPARDATFSTPSVRQPDPSAWLSSGPELTGMPRVRLAAPLAVLPMEPLPPEPVRPAALLTPEASSVGGPDQARYLESAPGWPVGQEEWGVAHTSSPPSTQTLSLWAPTGVLLPSLVELEYPFQAGRGASLQQELTEPTLALSAESHRPPELQDSVEGLSERPSR.

The N-terminal stretch at 1–22 (MWGSPALAWAVWLACVQPTVFP) is a signal peptide. Disordered regions lie at residues 206–242 (MGLYVDMNATTVTVQSPRQGLLQRWEVLNTSAELLPL), 269–422 (LVHI…DLLH), 434–520 (GPFL…SPSP), and 632–656 (LPREGARGHMDLSSSEPSQDIEGPG). Positions 216-230 (TVTVQSPRQGLLQRW) are enriched in pro residues. The segment covering 389 to 402 (GPETPPAGVPPAAS) has biased composition (low complexity).

It localises to the secreted. Its function is as follows. Plays a role in left-right patterning process. In Homo sapiens (Human), this protein is Ciliated left-right organizer ZP-N domains-containing protein.